A 507-amino-acid chain; its full sequence is Inactive alanine aminotransferase (507 aa).

Residues A173, S174, Y199, N255, and S324 each coordinate pyridoxal 5'-phosphate. K327 is subject to N6-(pyridoxal phosphate)lysine. Pyridoxal 5'-phosphate is bound at residue R336.

Belongs to the class-I pyridoxal-phosphate-dependent aminotransferase family. Alanine aminotransferase subfamily. Homodimer. It depends on pyridoxal 5'-phosphate as a cofactor.

It is found in the cytoplasm. The protein localises to the nucleus. In terms of biological role, inactive alanine aminotransferase. Forms a catalytically active Schiff base with PLP, but lacks alanine transaminase activity, probably due to an altered structural conformation of the dimeric enzyme. This suggests this protein may have a yet undiscovered physiological function. The chain is Inactive alanine aminotransferase (ALT2) from Saccharomyces cerevisiae (strain ATCC 204508 / S288c) (Baker's yeast).